We begin with the raw amino-acid sequence, 374 residues long: Chaperone protein DnaJ (374 aa).

A J domain is found at 5 to 69 (DYYEVLGVSK…DKKAKYDQFG (65 aa)). The CR-type zinc finger occupies 141-223 (GVNKKTILNL…CHGKGVESKR (83 aa)). Residues Cys-154, Cys-157, Cys-171, Cys-174, Cys-197, Cys-200, Cys-211, and Cys-214 each contribute to the Zn(2+) site. CXXCXGXG motif repeat units lie at residues 154–161 (CTKCDGVG), 171–178 (CTKCNGAG), 197–204 (CDKCNGVG), and 211–218 (CKNCHGKG).

The protein belongs to the DnaJ family. Homodimer. Zn(2+) is required as a cofactor.

Its subcellular location is the cytoplasm. Functionally, participates actively in the response to hyperosmotic and heat shock by preventing the aggregation of stress-denatured proteins and by disaggregating proteins, also in an autonomous, DnaK-independent fashion. Unfolded proteins bind initially to DnaJ; upon interaction with the DnaJ-bound protein, DnaK hydrolyzes its bound ATP, resulting in the formation of a stable complex. GrpE releases ADP from DnaK; ATP binding to DnaK triggers the release of the substrate protein, thus completing the reaction cycle. Several rounds of ATP-dependent interactions between DnaJ, DnaK and GrpE are required for fully efficient folding. Also involved, together with DnaK and GrpE, in the DNA replication of plasmids through activation of initiation proteins. The sequence is that of Chaperone protein DnaJ from Mesoplasma florum (strain ATCC 33453 / NBRC 100688 / NCTC 11704 / L1) (Acholeplasma florum).